The primary structure comprises 376 residues: Probable plastid-lipid-associated protein 3, chloroplastic (376 aa).

A chloroplast-targeting transit peptide spans 1–53; it reads MATLFTVARPSSLLYVSSINPSKTFSPSISLKLNSLSFSFGYRPKPLRFSKIR. The tract at residues 54-146 is disordered; it reads SSLPSESESE…EADAGNGSAV (93 aa). A compositionally biased stretch (polar residues) spans 85 to 96; it reads PDSQPDNVTVNV. A compositionally biased stretch (basic and acidic residues) spans 117–126; that stretch reads MESDPPRNED.

Belongs to the PAP/fibrillin family.

It is found in the plastid. It localises to the chloroplast. Its subcellular location is the plastoglobule. Its function is as follows. Probably involved in light/cold stress-related jasmonate (JA) biosynthesis. The chain is Probable plastid-lipid-associated protein 3, chloroplastic (PAP3) from Arabidopsis thaliana (Mouse-ear cress).